Reading from the N-terminus, the 452-residue chain is Maltoporin (452 aa).

The N-terminal stretch at 1–25 is a signal peptide; the sequence is MMITLRKLPLAVAVAAGVMSAQAMA.

It belongs to the porin LamB (TC 1.B.3) family. Homotrimer formed of three 18-stranded antiparallel beta-barrels, containing three independent channels.

The protein localises to the cell outer membrane. The enzyme catalyses beta-maltose(in) = beta-maltose(out). Functionally, involved in the transport of maltose and maltodextrins. In Salmonella heidelberg (strain SL476), this protein is Maltoporin.